The following is a 198-amino-acid chain: Probable GTP-binding protein EngB (198 aa).

One can recognise an EngB-type G domain in the interval Asp27–Leu198. GTP contacts are provided by residues Gly35–Ser42, Gly62–Leu66, Asp80–Gly83, Thr147–Asp150, and Phe179–Ser181. Mg(2+)-binding residues include Ser42 and Thr64.

It belongs to the TRAFAC class TrmE-Era-EngA-EngB-Septin-like GTPase superfamily. EngB GTPase family. Mg(2+) serves as cofactor.

Necessary for normal cell division and for the maintenance of normal septation. The polypeptide is Probable GTP-binding protein EngB (Streptococcus agalactiae serotype Ia (strain ATCC 27591 / A909 / CDC SS700)).